Here is a 1202-residue protein sequence, read N- to C-terminus: Probable DNA polymerase (1202 aa).

Belongs to the DNA polymerase type-B family.

The protein resides in the mitochondrion. The catalysed reaction is DNA(n) + a 2'-deoxyribonucleoside 5'-triphosphate = DNA(n+1) + diphosphate. In Ascobolus immersus, this protein is Probable DNA polymerase.